The following is a 246-amino-acid chain: Orotidine 5'-phosphate decarboxylase (246 aa).

Substrate-binding positions include aspartate 22, lysine 44, aspartate 71–threonine 80, threonine 130, arginine 191, glutamine 201, glycine 221, and arginine 222. Lysine 73 functions as the Proton donor in the catalytic mechanism.

It belongs to the OMP decarboxylase family. Type 1 subfamily. In terms of assembly, homodimer.

It carries out the reaction orotidine 5'-phosphate + H(+) = UMP + CO2. It functions in the pathway pyrimidine metabolism; UMP biosynthesis via de novo pathway; UMP from orotate: step 2/2. In terms of biological role, catalyzes the decarboxylation of orotidine 5'-monophosphate (OMP) to uridine 5'-monophosphate (UMP). This is Orotidine 5'-phosphate decarboxylase from Neisseria gonorrhoeae (strain ATCC 700825 / FA 1090).